The following is a 54-amino-acid chain: Beta-2-microglobulin (54 aa).

Residues 3-41 (KVELSDLSFNKDWSFYLLAHREFVPTATDKYACRVSHIT) enclose the Ig-like C1-type domain.

Belongs to the beta-2-microglobulin family. In terms of assembly, heterodimer of an alpha chain and a beta chain. Beta-2-microglobulin is the beta-chain of major histocompatibility complex class I molecules.

The protein localises to the secreted. In terms of biological role, component of the class I major histocompatibility complex (MHC). Involved in the presentation of peptide antigens to the immune system. This is Beta-2-microglobulin (B2M) from Mesocricetus auratus (Golden hamster).